A 382-amino-acid chain; its full sequence is Chaperone protein DnaJ (382 aa).

One can recognise a J domain in the interval 5-70 (DFYEILGVPK…QKRAAYDQYG (66 aa)). The CR-type zinc finger occupies 137–215 (GVTKEIRIPT…CHGHGRVEKT (79 aa)). Residues cysteine 150, cysteine 153, cysteine 167, cysteine 170, cysteine 189, cysteine 192, cysteine 203, and cysteine 206 each contribute to the Zn(2+) site. 4 CXXCXGXG motif repeats span residues 150 to 157 (CDICHGSG), 167 to 174 (CPTCHGSG), 189 to 196 (CPHCHGRG), and 203 to 210 (CNKCHGHG).

It belongs to the DnaJ family. Homodimer. It depends on Zn(2+) as a cofactor.

The protein resides in the cytoplasm. Functionally, participates actively in the response to hyperosmotic and heat shock by preventing the aggregation of stress-denatured proteins and by disaggregating proteins, also in an autonomous, DnaK-independent fashion. Unfolded proteins bind initially to DnaJ; upon interaction with the DnaJ-bound protein, DnaK hydrolyzes its bound ATP, resulting in the formation of a stable complex. GrpE releases ADP from DnaK; ATP binding to DnaK triggers the release of the substrate protein, thus completing the reaction cycle. Several rounds of ATP-dependent interactions between DnaJ, DnaK and GrpE are required for fully efficient folding. Also involved, together with DnaK and GrpE, in the DNA replication of plasmids through activation of initiation proteins. This is Chaperone protein DnaJ from Enterobacter sp. (strain 638).